Consider the following 796-residue polypeptide: Merozoite surface protein P92 (796 aa).

Positions 1 to 26 (MFAVNLKICIFLSLVSFLLQCKNTLA) are cleaved as a signal peptide. 14 N-linked (GlcNAc...) asparagine glycosylation sites follow: Asn27, Asn37, Asn65, Asn71, Asn168, Asn240, Asn275, Asn359, Asn502, Asn511, Asn607, Asn633, Asn728, and Asn765. The 6-Cys domain occupies 571 to 720 (KYEGIDLTDS…NSIKQEINKK (150 aa)). 2 disulfides stabilise this stretch: Cys614-Cys691 and Cys625-Cys689.

In terms of assembly, interacts with host complement factor CFH isoform 1 (via sushi 4-6 domains) and CFH isoform FHL-1 (via sushi 4-6 domains); this interaction recruits CFH onto the merozoite surface preventing complement-mediated cell lysis. The interaction does not affect CFH activity.

The protein localises to the cell surface. It localises to the cell membrane. Functionally, during the asexual blood stage, recruits host complement factor H CFH to the surface of merozoites resulting in the down-regulation of the host complement alternative pathway and thus, protecting merozoites from complement-mediated lysis. The polypeptide is Merozoite surface protein P92 (Plasmodium falciparum (isolate 3D7)).